The primary structure comprises 462 residues: UDP-N-acetylmuramoylalanine--D-glutamate ligase (462 aa).

112-118 is an ATP binding site; that stretch reads GTNGKTT.

The protein belongs to the MurCDEF family.

Its subcellular location is the cytoplasm. It carries out the reaction UDP-N-acetyl-alpha-D-muramoyl-L-alanine + D-glutamate + ATP = UDP-N-acetyl-alpha-D-muramoyl-L-alanyl-D-glutamate + ADP + phosphate + H(+). It functions in the pathway cell wall biogenesis; peptidoglycan biosynthesis. Cell wall formation. Catalyzes the addition of glutamate to the nucleotide precursor UDP-N-acetylmuramoyl-L-alanine (UMA). The sequence is that of UDP-N-acetylmuramoylalanine--D-glutamate ligase from Nostoc sp. (strain PCC 7120 / SAG 25.82 / UTEX 2576).